A 422-amino-acid polypeptide reads, in one-letter code: Proline--tRNA ligase (422 aa).

Belongs to the class-II aminoacyl-tRNA synthetase family. ProS type 2 subfamily. As to quaternary structure, homodimer.

It is found in the cytoplasm. The enzyme catalyses tRNA(Pro) + L-proline + ATP = L-prolyl-tRNA(Pro) + AMP + diphosphate. Catalyzes the attachment of proline to tRNA(Pro) in a two-step reaction: proline is first activated by ATP to form Pro-AMP and then transferred to the acceptor end of tRNA(Pro). This Wolbachia pipientis wMel protein is Proline--tRNA ligase.